The primary structure comprises 226 residues: Histone H2B.v1 (226 aa).

Residues 100–130 (FNSAKQYPPQPPPAKTATPSSPSSIPAPPIS) form a disordered region. Residues 114 to 123 (KTATPSSPSS) show a composition bias toward low complexity.

It belongs to the histone H2B family.

The protein is Histone H2B.v1 (H2Bv1) of Dictyostelium discoideum (Social amoeba).